Consider the following 76-residue polypeptide: Small proline-rich protein 2E (76 aa).

3 repeat units span residues 21–29 (KKCPEPCPH), 30–38 (PQCPEPCPP), and 39–47 (PKCPEPCPE). Residues 21–47 (KKCPEPCPHPQCPEPCPPPKCPEPCPE) form a 3 X 9 AA approximate tandem repeats region. The disordered stretch occupies residues 52 to 76 (PSYQQKCPPVQPPPPCQQKCPPKSK).

The protein belongs to the cornifin (SPRR) family. In terms of tissue distribution, expressed in uterus.

It localises to the cytoplasm. Cross-linked envelope protein of keratinocytes. It is a keratinocyte protein that first appears in the cell cytosol, but ultimately becomes cross-linked to membrane proteins by transglutaminase. All that results in the formation of an insoluble envelope beneath the plasma membrane. The sequence is that of Small proline-rich protein 2E (Sprr2e) from Mus musculus (Mouse).